We begin with the raw amino-acid sequence, 181 residues long: ADP-ribosylation factor 1 (181 aa).

G2 is modified (N-acetylglycine; alternate). G2 is lipidated: N-myristoyl glycine; alternate. The interval N3–K16 is important for the stable binding to the membranes. GTP-binding positions include G24 to T32, N126 to D129, and A160.

This sequence belongs to the small GTPase superfamily. Arf family. Interacts (when activated) with GGA1, GGA2 and GGA3; the interaction is required for proper subcellular location of GGA1, GGA2 and GGA3. Interacts with ARHGAP21, ASAP2, GGA1, HERC1, PRKCABP, PIP5K1B, TMED2, PSCD2, TMED10 and GRIA2. Interacts with ARFGAP1, which hydrolyzes GTP and thus, regulates its function. Interacts with PI4KB in the Golgi complex. Interacts with NCS1/FREQ in the Golgi and at the plasma membrane. Interacts with PLEKHA3. Interacts with PLEKHA8; the interaction, together with phosphatidylinositol 4-phosphate binding, is required for FAPP2-mediated glucosylceramide transfer activity. Interacts (activated) with PICK1 (via PDZ domain); the interaction blocks Arp2/3 complex inhibition. Interacts with IQSEC1. Interacts with C9orf72.

Its subcellular location is the golgi apparatus membrane. The protein localises to the synapse. It localises to the synaptosome. The protein resides in the postsynaptic density. The catalysed reaction is GTP + H2O = GDP + phosphate + H(+). Its activity is regulated as follows. Alternates between an inactive GDP-bound form and an active GTP-bound form. Activated by guanine nucleotide-exchange factors (GEFs) and inactivated by GTPase-activating proteins (GAPs). In terms of biological role, small GTPase involved in protein trafficking between different compartments. Modulates vesicle budding and uncoating within the Golgi complex. In its GTP-bound form, triggers the recruitment of coatomer proteins to the Golgi membrane. The hydrolysis of ARF1-bound GTP, which is mediated by ARFGAPs proteins, is required for dissociation of coat proteins from Golgi membranes and vesicles. The GTP-bound form interacts with PICK1 to limit PICK1-mediated inhibition of Arp2/3 complex activity; the function is linked to AMPA receptor (AMPAR) trafficking, regulation of synaptic plasticity of excitatory synapses and spine shrinkage during long-term depression (LTD). Plays a key role in the regulation of intestinal stem cells and gut microbiota, and is essential for maintaining intestinal homeostasis. Also plays a critical role in mast cell expansion but not in mast cell maturation by facilitating optimal mTORC1 activation. The protein is ADP-ribosylation factor 1 (ARF1) of Bos taurus (Bovine).